The chain runs to 315 residues: MLLKRLGLAALFSLSMVGCTTAPNTLAVNTTQKIIQYERSKSDLEVKSLTLASGDKMVYAENDNVTGEPLLLIHGFGGNKDNFTRIADKLEGYHLIIPDLLGFGNSSKPMTADYRADAQATRLHELMQAKGLASNTHVGGNSMGGAISVAYAAKYPKEIKSLWLVDTAGFWSAGVPKSLEGATLENNPLLINSKEDFYKMYDFVMYKPPYIPKSVKAVFAQERINNKALDTKILEQIVTDNVEERAKIIAKYNIPTLVVWGDKDQVIKPETTELIKEIIPQAQVIMMNDVGHVPMVEAVKDTANDYKAFRDGLKK.

An N-terminal signal peptide occupies residues 1–18 (MLLKRLGLAALFSLSMVG). Cys19 carries N-palmitoyl cysteine lipidation. A lipid anchor (S-diacylglycerol cysteine) is attached at Cys19. Positions 69-296 (PLLLIHGFGG…MNDVGHVPMV (228 aa)) constitute an AB hydrolase-1 domain. His74 is a catalytic residue. Ser142 acts as the Charge relay system in catalysis.

This sequence belongs to the lipase/esterase LIP3/BchO family.

The protein resides in the cell membrane. It catalyses the reaction a triacylglycerol + H2O = a diacylglycerol + a fatty acid + H(+). The polypeptide is Lipase 3 (lip3) (Moraxella sp. (strain TA144)).